The following is a 545-amino-acid chain: Glucose-6-phosphate isomerase (545 aa).

Glutamate 351 functions as the Proton donor in the catalytic mechanism. Catalysis depends on residues histidine 382 and lysine 510.

This sequence belongs to the GPI family.

The protein resides in the cytoplasm. It carries out the reaction alpha-D-glucose 6-phosphate = beta-D-fructose 6-phosphate. The protein operates within carbohydrate biosynthesis; gluconeogenesis. Its pathway is carbohydrate degradation; glycolysis; D-glyceraldehyde 3-phosphate and glycerone phosphate from D-glucose: step 2/4. Its function is as follows. Catalyzes the reversible isomerization of glucose-6-phosphate to fructose-6-phosphate. The sequence is that of Glucose-6-phosphate isomerase from Shewanella halifaxensis (strain HAW-EB4).